The sequence spans 1074 residues: Semaphorin-5A (1074 aa).

Positions 1–22 (MKGTCVIAWLFSSLGLWRLAHP) are cleaved as a signal peptide. Residues 23–968 (EAQGTTQCQR…EEKRCGEFNM (946 aa)) are Extracellular-facing. One can recognise a Sema domain in the interval 35–484 (HPVISYKEIG…LREHVVKIPL (450 aa)). Disulfide bonds link cysteine 104–cysteine 114 and cysteine 131–cysteine 140. Asparagine 142, asparagine 168, asparagine 227, and asparagine 277 each carry an N-linked (GlcNAc...) asparagine glycan. Intrachain disulfides connect cysteine 254–cysteine 357 and cysteine 278–cysteine 320. 3 N-linked (GlcNAc...) asparagine glycosylation sites follow: asparagine 323, asparagine 367, and asparagine 437. Disulfide bonds link cysteine 487-cysteine 504 and cysteine 496-cysteine 513. 2 N-linked (GlcNAc...) asparagine glycosylation sites follow: asparagine 536 and asparagine 591. TSP type-1 domains follow at residues 540–593 (DGHF…ANCS), 595–651 (NGGW…LLCP), 653–702 (HMFW…NPCP), 707–765 (TTPW…GCST), 784–839 (NGAW…LPCP), 841–896 (DGVW…QPCP), and 897–944 (ESWS…VFDS). Intrachain disulfides connect cysteine 607–cysteine 644, cysteine 611–cysteine 650, cysteine 622–cysteine 634, cysteine 665–cysteine 696, cysteine 669–cysteine 701, and cysteine 680–cysteine 686. N-linked (GlcNAc...) asparagine glycosylation occurs at asparagine 717. Intrachain disulfides connect cysteine 796–cysteine 833, cysteine 800–cysteine 838, cysteine 811–cysteine 823, cysteine 853–cysteine 890, cysteine 857–cysteine 895, and cysteine 868–cysteine 880. Asparagine 933 carries N-linked (GlcNAc...) asparagine glycosylation. The chain crosses the membrane as a helical span at residues 969–989 (FHMIAVGLSSSILGCLLTLLV). Over 990–1074 (YTYCQRYQQQ…FTDLNNYDEY (85 aa)) the chain is Cytoplasmic.

The protein belongs to the semaphorin family. As to quaternary structure, binds PLXNB3.

It localises to the membrane. In terms of biological role, bifunctional axonal guidance cue regulated by sulfated proteoglycans; attractive effects result from interactions with heparan sulfate proteoglycans (HSPGs), while the inhibitory effects depend on interactions with chondroitin sulfate proteoglycans (CSPGs). Ligand for receptor PLXNB3. In glioma cells, SEMA5A stimulation of PLXNB3 results in the disassembly of F-actin stress fibers, disruption of focal adhesions and cellular collapse as well as inhibition of cell migration and invasion through ARHGDIA-mediated inactivation of RAC1. May promote angiogenesis by increasing endothelial cell proliferation and migration and inhibiting apoptosis. In Homo sapiens (Human), this protein is Semaphorin-5A (SEMA5A).